Reading from the N-terminus, the 191-residue chain is Small ribosomal subunit protein uS5 (191 aa).

The region spanning 21–84 (FADRLVAINR…EQAKRQMIRV (64 aa)) is the S5 DRBM domain. The interval 155–191 (LRKESSPRSVAQRRGKKVADILPKVDAAPAPAETAEA) is disordered. Positions 181–191 (AAPAPAETAEA) are enriched in low complexity.

It belongs to the universal ribosomal protein uS5 family. As to quaternary structure, part of the 30S ribosomal subunit. Contacts proteins S4 and S8.

Functionally, with S4 and S12 plays an important role in translational accuracy. Its function is as follows. Located at the back of the 30S subunit body where it stabilizes the conformation of the head with respect to the body. This Roseobacter denitrificans (strain ATCC 33942 / OCh 114) (Erythrobacter sp. (strain OCh 114)) protein is Small ribosomal subunit protein uS5.